Consider the following 262-residue polypeptide: Methanethiol S-methyltransferase (262 aa).

A run of 5 helical transmembrane segments spans residues 22–42 (LYSL…IGFV), 55–75 (PGAS…LFAV), 100–120 (ATYV…WQPI), 134–154 (AVLT…TFLI), and 195–215 (GFLM…VFAL).

It belongs to the nurim family.

It is found in the membrane. It catalyses the reaction methanethiol + S-adenosyl-L-methionine = dimethyl sulfide + S-adenosyl-L-homocysteine + H(+). Functionally, catalyzes the methylation of methanethiol (MeSH) to yield dimethylsulphide (DMS). This Pseudomonas deceptionensis protein is Methanethiol S-methyltransferase.